Consider the following 189-residue polypeptide: uncharacterized protein (189 aa).

This sequence belongs to the flavoredoxin family. FMN is required as a cofactor.

This is an uncharacterized protein from Escherichia coli (strain K12).